We begin with the raw amino-acid sequence, 590 residues long: RNA-binding protein 47 (590 aa).

Residues 1 to 21 show a composition bias toward polar residues; that stretch reads MTAEDSTTAMNSDPTVGSSTK. Residues 1–26 form a disordered region; sequence MTAEDSTTAMNSDPTVGSSTKVPEGV. RRM domains follow at residues 71-149, 151-233, and 246-318; these read CEVF…CSVD, CRLF…WAEP, and KILY…LAKP. An asymmetric dimethylarginine; alternate mark is found at arginine 396 and arginine 407. Omega-N-methylarginine; alternate is present on residues arginine 396 and arginine 407.

Belongs to the RRM RBM47 family. Homodimer. Interacts with A1CF. Interacts with APOBEC1; form an mRNA editing complex. Interacts with RBPMS.

The protein localises to the nucleus. It localises to the cytoplasm. Functionally, single-stranded RNA-binding protein that functions in a variety of RNA processes, including alternative splicing, RNA stabilization, and RNA editing. Functions as an enzyme-substrate adapter for the cytidine deaminase APOBEC1. With APOBEC1 forms an mRNA editing complex involved into cytidine to uridine editing of a variety of mRNA molecules. Through the binding of their 3'UTR, also stabilizes a variety of mRNAs and regulates the expression of genes such as the interferon alpha/beta receptor and interleukin-10. Also involved in the alternative splicing of several genes including TJP1. Binds the pre-mRNA (U)GCAUG consensus sequences in downstream intronic regions of alternative exons regulating their exclusion and inclusion into mRNAs. Independently of its RNA-binding activity, could negatively regulate MAVS by promoting its lysosomal degradation. The chain is RNA-binding protein 47 from Rattus norvegicus (Rat).